We begin with the raw amino-acid sequence, 329 residues long: ATPase ASNA1 homolog 1 (329 aa).

26 to 33 (KGGVGKTT) is a binding site for ATP. Residue aspartate 55 is part of the active site. Glutamate 235 and asparagine 262 together coordinate ATP. 2 residues coordinate Zn(2+): cysteine 271 and cysteine 274.

The protein belongs to the arsA ATPase family. As to quaternary structure, homodimer.

The protein resides in the cytoplasm. The protein localises to the endoplasmic reticulum. Functionally, ATPase required for the post-translational delivery of tail-anchored (TA) proteins to the endoplasmic reticulum. Recognizes and selectively binds the transmembrane domain of TA proteins in the cytosol. This complex then targets to the endoplasmic reticulum by membrane-bound receptors, where the tail-anchored protein is released for insertion. This process is regulated by ATP binding and hydrolysis. ATP binding drives the homodimer towards the closed dimer state, facilitating recognition of newly synthesized TA membrane proteins. ATP hydrolysis is required for insertion. Subsequently, the homodimer reverts towards the open dimer state, lowering its affinity for the membrane-bound receptor, and returning it to the cytosol to initiate a new round of targeting. The sequence is that of ATPase ASNA1 homolog 1 from Paramecium tetraurelia.